The primary structure comprises 501 residues: MTEQTQDENKLIAERRAKLEHIRTNCPANGHPNNFDRKHKAADIQAEFGHNTKEELEGMGIERSIAGRVMAKRGPFLVIQDVSGRIQAYAGKDVQKDLKEKFLGLDIGDIIGVTGQLHLSGKGDLYVNMEEYQLLTKALRPLPEKFHGLTDQETRYRQRYVDLIVNEDSREAFIMRSKVVSAIRNFMVKKEFMEVETPMMHSIPGGASARPFETHHNALDIAMYLRIAPELYLKRLVVGGFERVFEINRNFRNEGLSPRHNPEFTMMEFYMAYADFNDLMDLTEEMLSSIATELCGSPQLPYGEHTVDFGGPYARLSMLDAIKKYNPDNATIQSMTYEEVKDVEFMRDLAKSLGMTVEKFWTCGQLLEEIFGETAETQLMQPTFITGYPADISPLARRNDDNHFITDRFEFFIGGREVANGFSELNDAEDQDSRFKAQVDAKDAGDDEAMFYDADYITALEHGLPPTAGQGIGIDRLVMLFTNTHTIRDVILFPAMRPQAN.

The Mg(2+) site is built by Glu410 and Glu417.

Belongs to the class-II aminoacyl-tRNA synthetase family. As to quaternary structure, homodimer. Mg(2+) is required as a cofactor.

It is found in the cytoplasm. It carries out the reaction tRNA(Lys) + L-lysine + ATP = L-lysyl-tRNA(Lys) + AMP + diphosphate. This is Lysine--tRNA ligase from Shewanella pealeana (strain ATCC 700345 / ANG-SQ1).